The primary structure comprises 708 residues: C-Jun-amino-terminal kinase-interacting protein 1 (708 aa).

The disordered stretch occupies residues 1–26 (MAERESGLSGGAASPPAASPFLGLHI). The segment covering 11-24 (GAASPPAASPFLGL) has biased composition (low complexity). Phosphoserine is present on residues serine 14, serine 28, and serine 39. The interval 69 to 368 (PPRAGLLSAG…PPRASLSSDT (300 aa)) is disordered. Residues 71-87 (RAGLLSAGSSGSAGSRL) show a composition bias toward low complexity. The residue at position 103 (threonine 103) is a Phosphothreonine; by MAPK8, MAPK9 and MAPK10. Over residues 105-116 (GAEDDEEDDDEL) the composition is skewed to acidic residues. Residues 126–282 (SKAESGQEPA…EATEEIYLTP (157 aa)) form a JNK-binding domain (JBD) region. Serine 149 is subject to Phosphoserine. The minimal inhibitory domain (MID) stretch occupies residues 154 to 173 (RPKRPTTLNLFPQVPRSQDT). Positions 159-179 (TTLNLFPQVPRSQDTLNNNSL) are enriched in polar residues. Phosphoserine occurs at positions 178, 184, 190, 192, and 193. Polar residues predominate over residues 191–201 (RSSSPLKTGEQ). The residue at position 202 (threonine 202) is a Phosphothreonine; by MAPK8, MAPK9 and MAPK10. The residue at position 211 (serine 211) is a Phosphoserine. The segment covering 220–232 (PVPTQDRGTSTDS) has biased composition (polar residues). Basic and acidic residues predominate over residues 264–274 (IHYQADVRLEA). The tract at residues 280–468 (LTPVQRPPDP…NVFMSGRSRS (189 aa)) is interaction with MAP3K7. A compositionally biased stretch (polar residues) spans 292 to 308 (PTSTFLPPTESRMSVSS). Serine 308, serine 325, serine 327, serine 337, serine 352, serine 363, serine 366, serine 404, and serine 406 each carry phosphoserine. 2 short sequence motifs (D-box) span residues 350 to 357 (RGSLGEPP) and 361 to 369 (RASLSSDTS). A Phosphothreonine modification is found at threonine 408. Residues 426–448 (EEYEEAPQPRPPTCLSEDSTPDE) form a disordered region. Phosphoserine occurs at positions 441 and 444. Threonine 445 is subject to Phosphothreonine. 4 positions are modified to phosphoserine: serine 466, serine 468, serine 469, and serine 470. An interaction with VRK2 region spans residues 468–657 (SSSAESFGLF…PKNNKYFGFI (190 aa)). Residues 485–546 (EHEQTHRAIF…PAYYAIEVTK (62 aa)) enclose the SH3 domain. The 140-residue stretch at 558–697 (SDWIDQFRVK…FQQFYKQFVE (140 aa)) folds into the PID domain.

Belongs to the JIP scaffold family. Forms homo- or heterooligomeric complexes. Binds specific components of the JNK signaling pathway namely MAPK8/JNK1, MAPK9/JNK2, MAPK10/JNK3, MAP2K7/MKK7, MAP3K11/MLK3 and DLK1. Also binds the proline-rich domain-containing splice variant of apolipoprotein E receptor 2 (ApoER2). Interacts, via the PID domain, with ARHGEF28. Binds the cytoplasmic tails of LRP1 and LRP2 (Megalin). Binds the TPR motif-containing C-terminal of kinesin light chain, KLC1. Pre-assembled MAPK8IP1 scaffolding complexes are then transported as a cargo of kinesin, to the required subcellular location. Interacts with the cytoplasmic domain of APP. Interacts with DCLK2, VRK2 and MAP3K7/TAK1. Found in a complex with SH3RF1, RAC1, MAP3K11/MLK3, MAP2K7/MKK7 and MAPK8/JNK1. Found in a complex with SH3RF1, RAC2, MAP3K7/TAK1, MAP2K7/MKK7, MAPK8/JNK1 and MAPK9/JNK2. Interacts with SH3RF2. In terms of processing, phosphorylated by MAPK8, MAPK9 and MAPK10. Phosphorylation on Thr-103 is also necessary for the dissociation and activation of MAP3K12. Phosphorylated by VRK2. Hyperphosphorylated during mitosis following activation of stress-activated and MAP kinases. Ubiquitinated. Two preliminary events are required to prime for ubiquitination; phosphorylation and an increased in intracellular calcium concentration. Then, the calcium influx initiates ubiquitination and degradation by the ubiquitin-proteasome pathway. Highly expressed in brain and pancreatic beta-cells. Weaker expression found in kidney.

The protein resides in the cytoplasm. It is found in the perinuclear region. The protein localises to the nucleus. Its subcellular location is the endoplasmic reticulum membrane. It localises to the mitochondrion membrane. In terms of biological role, the JNK-interacting protein (JIP) group of scaffold proteins selectively mediates JNK signaling by aggregating specific components of the MAPK cascade to form a functional JNK signaling module. Required for JNK activation in response to excitotoxic stress. Cytoplasmic MAPK8IP1 causes inhibition of JNK-regulated activity by retaining JNK in the cytoplasm and thus inhibiting the JNK phosphorylation of c-Jun. May also participate in ApoER2-specific reelin signaling. Directly, or indirectly, regulates GLUT2 gene expression and beta-cell function. Appears to have a role in cell signaling in mature and developing nerve terminals. May function as a regulator of vesicle transport, through interactions with the JNK-signaling components and motor proteins. Functions as an anti-apoptotic protein and whose level seems to influence the beta-cell death or survival response. Acts as a scaffold protein that coordinates with SH3RF1 in organizing different components of the JNK pathway, including RAC1 or RAC2, MAP3K11/MLK3 or MAP3K7/TAK1, MAP2K7/MKK7, MAPK8/JNK1 and/or MAPK9/JNK2 into a functional multiprotein complex to ensure the effective activation of the JNK signaling pathway. Regulates the activation of MAPK8/JNK1 and differentiation of CD8(+) T-cells. The sequence is that of C-Jun-amino-terminal kinase-interacting protein 1 (Mapk8ip1) from Rattus norvegicus (Rat).